The primary structure comprises 235 residues: Ribosomal RNA large subunit methyltransferase E (235 aa).

The S-adenosyl-L-methionine site is built by glycine 76, tryptophan 78, aspartate 99, aspartate 115, and aspartate 139. Residue lysine 179 is the Proton acceptor of the active site.

The protein belongs to the class I-like SAM-binding methyltransferase superfamily. RNA methyltransferase RlmE family.

It is found in the cytoplasm. It carries out the reaction uridine(2552) in 23S rRNA + S-adenosyl-L-methionine = 2'-O-methyluridine(2552) in 23S rRNA + S-adenosyl-L-homocysteine + H(+). Functionally, specifically methylates the uridine in position 2552 of 23S rRNA at the 2'-O position of the ribose in the fully assembled 50S ribosomal subunit. This Rhodopseudomonas palustris (strain BisB5) protein is Ribosomal RNA large subunit methyltransferase E.